A 785-amino-acid chain; its full sequence is Cadherin-7 (785 aa).

An N-terminal signal peptide occupies residues 1 to 27 (MKLGKVEFCHLLQIIALFLCLSGMNQA). Residues 28–47 (EPSRSRSKPYFQSGRTRTKR) constitute a propeptide that is removed on maturation. Over 48-607 (SWVWNQFFVL…AYILPAGLST (560 aa)) the chain is Extracellular. 5 Cadherin domains span residues 49 to 153 (WVWN…EPKF), 154 to 262 (LDGP…PPRF), 263 to 377 (PRRS…PPVF), 378 to 482 (TSRL…APEF), and 482 to 599 (FAME…AEAY). Asparagine 449 and asparagine 530 each carry an N-linked (GlcNAc...) asparagine glycan. Residues 608-628 (GALIAILACVLTLLVLVLLIV) traverse the membrane as a helical segment. Over 629–785 (TMRRRKKEPL…YGSGPDCLYS (157 aa)) the chain is Cytoplasmic.

It localises to the cell membrane. In terms of biological role, cadherins are calcium-dependent cell adhesion proteins. They preferentially interact with themselves in a homophilic manner in connecting cells; cadherins may thus contribute to the sorting of heterogeneous cell types. This chain is Cadherin-7 (CDH7), found in Gallus gallus (Chicken).